Consider the following 264-residue polypeptide: Small ribosomal subunit protein uS3 (264 aa).

The KH type-2 domain occupies 39-107 (VRDFLKKKLK…PVHVNIEEIR (69 aa)). Positions 211 to 264 (NDAPVVEEPQDDRRRRPGRPEGRRREGEGRPGGNRRGGAGAGRRAAPGDAKSGE) are disordered. Residues 221–239 (DDRRRRPGRPEGRRREGEG) show a composition bias toward basic and acidic residues. The span at 240-251 (RPGGNRRGGAGA) shows a compositional bias: gly residues.

It belongs to the universal ribosomal protein uS3 family. In terms of assembly, part of the 30S ribosomal subunit. Forms a tight complex with proteins S10 and S14.

Functionally, binds the lower part of the 30S subunit head. Binds mRNA in the 70S ribosome, positioning it for translation. The polypeptide is Small ribosomal subunit protein uS3 (Cupriavidus pinatubonensis (strain JMP 134 / LMG 1197) (Cupriavidus necator (strain JMP 134))).